The following is a 410-amino-acid chain: Putative ribosomal large subunit pseudouridine synthase SVR1, chloroplastic (410 aa).

Residues 1-35 (MASVAASSSISFAASFLKIKAFPLSPRFFPIRTLR) constitute a chloroplast transit peptide. The tract at residues 96–143 (HNLAIDATTQNPKKKDKSKKKQPQATSSSSATTTASSPASHSEVKPKL) is disordered. A compositionally biased stretch (basic residues) spans 107 to 117 (PKKKDKSKKKQ). Residues 118 to 135 (PQATSSSSATTTASSPAS) are compositionally biased toward low complexity. One can recognise an S4 RNA-binding domain in the interval 160 to 229 (QRLSKVLAAA…PKVYFALNKP (70 aa)). The active-site Nucleophile is D274.

Belongs to the pseudouridine synthase RsuA family. In terms of tissue distribution, highly expressed in young seedlings. Expressed in roots, rosette leaves, cauline leaves, stems and flowers.

Its subcellular location is the plastid. The protein localises to the chloroplast. Its function is as follows. Responsible for synthesis of pseudouridine in chloroplastic 23S ribosomal RNA. Necessary for normal chloroplast rRNA processing and translation. Required for normal chloroplast development and maintenance. May function in other plastids, such as root amyloplasts. The protein is Putative ribosomal large subunit pseudouridine synthase SVR1, chloroplastic (SVR1) of Arabidopsis thaliana (Mouse-ear cress).